Here is a 97-residue protein sequence, read N- to C-terminus: Protein ParC (97 aa).

This chain is Protein ParC (parC), found in Escherichia coli.